Here is a 187-residue protein sequence, read N- to C-terminus: Intermembrane transport lipoprotein PqiC (187 aa).

An N-terminal signal peptide occupies residues 1–15 (MKKWLVTIAALWLAG). Residue Cys16 is the site of N-palmitoyl cysteine attachment. Cys16 carries S-diacylglycerol cysteine lipidation.

As to quaternary structure, may form a complex composed of PqiA, PqiB and PqiC. Interacts with PqiB.

The protein localises to the cell outer membrane. Component of a transport pathway that contributes to membrane integrity. This chain is Intermembrane transport lipoprotein PqiC, found in Escherichia coli (strain K12).